A 441-amino-acid polypeptide reads, in one-letter code: 23S rRNA (uracil(1939)-C(5))-methyltransferase RlmD (441 aa).

A TRAM domain is found at 10–68 (KPLKQQSLVLDITAMDHHGRGIAKHNNKVCFVSNALPNEQVKATIIADKARYSEAQTHK). [4Fe-4S] cluster is bound by residues Cys81, Cys87, Cys90, and Cys169. Gln274, Phe303, Asn308, Glu324, Asp351, and Asp372 together coordinate S-adenosyl-L-methionine. The active-site Nucleophile is Cys398.

This sequence belongs to the class I-like SAM-binding methyltransferase superfamily. RNA M5U methyltransferase family. RlmD subfamily.

It catalyses the reaction uridine(1939) in 23S rRNA + S-adenosyl-L-methionine = 5-methyluridine(1939) in 23S rRNA + S-adenosyl-L-homocysteine + H(+). Catalyzes the formation of 5-methyl-uridine at position 1939 (m5U1939) in 23S rRNA. The sequence is that of 23S rRNA (uracil(1939)-C(5))-methyltransferase RlmD from Pseudoalteromonas translucida (strain TAC 125).